Here is a 559-residue protein sequence, read N- to C-terminus: Large neutral amino acids transporter small subunit 3 (559 aa).

Residues 20–40 (VLENLFFSAVLLGWGSLLIIL) form a helical membrane-spanning segment. N57 carries N-linked (GlcNAc...) asparagine glycosylation. 5 helical membrane passes run 78 to 98 (LGFT…GILM), 105 to 124 (PVRL…MALA), 131 to 151 (LSPL…CLTF), 168 to 188 (MALM…IKLI), and 191 to 211 (AGVA…LIFL). Residues N212 and N229 are each glycosylated (N-linked (GlcNAc...) asparagine). Phosphoserine is present on residues S237, S262, and S267. Helical transmembrane passes span 304-324 (FLWS…YMAA), 357-377 (SVFG…GYIM), 419-439 (AISA…TCLI), 446-466 (FVTF…CGSL), 485-505 (LISA…VGPL), and 510-530 (FWVN…PSYL).

Belongs to the SLC43A transporter (TC 2.A.1.44) family. In terms of tissue distribution, ubiquitously expressed in fetus and adult. Highest expression in adult pancreas, liver, skeletal muscle. In fetus, highest expression in liver and lower levels in kidney, and lung. Exclusively expressed in the glomeruli along the glomerular capillary walls.

The protein resides in the cell membrane. It is found in the apical cell membrane. The protein localises to the endoplasmic reticulum membrane. It carries out the reaction D-leucine(in) = D-leucine(out). The enzyme catalyses L-leucine(in) = L-leucine(out). It catalyses the reaction L-isoleucine(in) = L-isoleucine(out). The catalysed reaction is L-methionine(in) = L-methionine(out). It carries out the reaction L-phenylalanine(in) = L-phenylalanine(out). The enzyme catalyses L-valine(in) = L-valine(out). In terms of biological role, uniport that mediates the transport of neutral amino acids such as L-leucine, L-isoleucine, L-valine, and L-phenylalanine. The transport activity is sodium ions-independent, electroneutral and mediated by a facilitated diffusion. The polypeptide is Large neutral amino acids transporter small subunit 3 (Homo sapiens (Human)).